Here is a 255-residue protein sequence, read N- to C-terminus: MYSSYSLFKCLVCFYILGIQVLIHSVSSQNLTNAYLHHKCLTRQGKYKPRSPYEENLNYLIDHISKYHFRDGFRHSAGEAPNSGNFVFQCRGDSYGSICGSCYATAVAGLRKRCQRYKGAIIWYDQCFLKVSTINSPPTKMDYENTFSMHNPNNINGDTQLFNQKMKNFLYELALKADKPKADGTGLLYYAAGTKRLGKNKLYAMVQCTLDIFHCKVCLEWSIKELSKCCEGKQGARVLGTSCNVRYELYPFIRT.

The N-terminal stretch at 1–28 (MYSSYSLFKCLVCFYILGIQVLIHSVSS) is a signal peptide. 2 consecutive Gnk2-homologous domains span residues 35–136 (YLHH…TINS) and 143–252 (YENT…LYPF).

It belongs to the cysteine-rich repeat secretory protein family.

Its subcellular location is the secreted. The chain is Putative cysteine-rich repeat secretory protein 32 (CRRSP32) from Arabidopsis thaliana (Mouse-ear cress).